The chain runs to 340 residues: Predicted GPI-anchored protein 46 (340 aa).

A signal peptide spans 1-29 (MKILLIYSMTPKLVIWFTLFVLCLQMGDT). The segment covering 99-115 (SETTTTTTQESETSIAT) has biased composition (low complexity). Disordered stretches follow at residues 99 to 154 (SETT…SLSS) and 181 to 212 (MSSS…IKNY). N127 carries an N-linked (GlcNAc...) asparagine glycan. The span at 182-191 (SSSSSSSSGS) shows a compositional bias: low complexity. Over residues 192–202 (LRDKSKLKQEN) the composition is skewed to basic and acidic residues. N270 carries N-linked (GlcNAc...) asparagine glycosylation. Residue N314 is the site of GPI-anchor amidated asparagine attachment. The propeptide at 315-340 (SAPLLWIKISKPTVCLVIALTFLLLG) is removed in mature form.

Its subcellular location is the cell membrane. It localises to the secreted. The sequence is that of Predicted GPI-anchored protein 46 (PGA46) from Candida albicans (strain SC5314 / ATCC MYA-2876) (Yeast).